Consider the following 190-residue polypeptide: Protein PLANT CADMIUM RESISTANCE 10 (190 aa).

The next 2 membrane-spanning stretches (helical) occupy residues 78 to 98 (LLGS…WALV) and 108 to 125 (GALL…ACGY).

Belongs to the cornifelin family.

The protein localises to the membrane. Functionally, may be involved in cadmium resistance. The polypeptide is Protein PLANT CADMIUM RESISTANCE 10 (PCR10) (Arabidopsis thaliana (Mouse-ear cress)).